Here is a 447-residue protein sequence, read N- to C-terminus: UDP-glycosyltransferase 79B10 (447 aa).

UDP-alpha-D-glucose is bound by residues serine 260, 319-321, 336-344, and 358-361; these read VQQ, HCGFGSMWE, and LADQ.

It belongs to the UDP-glycosyltransferase family.

In Arabidopsis thaliana (Mouse-ear cress), this protein is UDP-glycosyltransferase 79B10 (UGT79B10).